The primary structure comprises 329 residues: uncharacterized protein (329 aa).

Helical transmembrane passes span 5–24, 34–56, 92–114, 124–146, 159–181, 196–218, 231–253, 263–285, and 306–328; these read NLLL…FLTV, IAVA…YLIF, FGYI…LEWG, IIFF…VLFY, SANF…LLSL, TAHR…LQYL, FSIV…LGAY, LIGV…RLFG, and FWLF…RILT.

The protein localises to the cell membrane. This is an uncharacterized protein from Archaeoglobus fulgidus (strain ATCC 49558 / DSM 4304 / JCM 9628 / NBRC 100126 / VC-16).